The following is a 183-amino-acid chain: Putative 3-methyladenine DNA glycosylase (183 aa).

The protein belongs to the DNA glycosylase MPG family.

The polypeptide is Putative 3-methyladenine DNA glycosylase (Wolbachia pipientis subsp. Culex pipiens (strain wPip)).